The following is a 343-amino-acid chain: Probable dual-specificity RNA methyltransferase RlmN (343 aa).

E91 acts as the Proton acceptor in catalysis. The Radical SAM core domain occupies 97 to 327 (YKHGNSICVS…TTIRREMGSD (231 aa)). C104 and C332 are disulfide-bonded. [4Fe-4S] cluster contacts are provided by C111, C115, and C118. Residues 158 to 159 (GE), S190, 213 to 215 (SLH), and N289 each bind S-adenosyl-L-methionine. C332 functions as the S-methylcysteine intermediate in the catalytic mechanism.

It belongs to the radical SAM superfamily. RlmN family. The cofactor is [4Fe-4S] cluster.

The protein resides in the cytoplasm. It catalyses the reaction adenosine(2503) in 23S rRNA + 2 reduced [2Fe-2S]-[ferredoxin] + 2 S-adenosyl-L-methionine = 2-methyladenosine(2503) in 23S rRNA + 5'-deoxyadenosine + L-methionine + 2 oxidized [2Fe-2S]-[ferredoxin] + S-adenosyl-L-homocysteine. The enzyme catalyses adenosine(37) in tRNA + 2 reduced [2Fe-2S]-[ferredoxin] + 2 S-adenosyl-L-methionine = 2-methyladenosine(37) in tRNA + 5'-deoxyadenosine + L-methionine + 2 oxidized [2Fe-2S]-[ferredoxin] + S-adenosyl-L-homocysteine. In terms of biological role, specifically methylates position 2 of adenine 2503 in 23S rRNA and position 2 of adenine 37 in tRNAs. The polypeptide is Probable dual-specificity RNA methyltransferase RlmN (Clostridium novyi (strain NT)).